Here is a 642-residue protein sequence, read N- to C-terminus: Putative ankyrin repeat protein L91 (642 aa).

ANK repeat units lie at residues 42 to 76 (HFTK…VKNP), 85 to 118 (EGWT…NPNI), 153 to 186 (NGFT…NVDS), 190 to 224 (NGET…TLHK), 227 to 256 (NGFT…DVNA), 260 to 288 (EGKS…EINH), 292 to 322 (NDIN…NPNE), 326 to 360 (NKNA…NPNI), 365 to 397 (SRTI…NVNA), 401 to 434 (EGRT…NVNH), 438 to 470 (DGAH…DVNI), 475 to 514 (KKWT…NVNA), 518 to 550 (YGNN…NVNH), and 554 to 587 (NGDT…NPNI).

The polypeptide is Putative ankyrin repeat protein L91 (Acanthamoeba polyphaga (Amoeba)).